We begin with the raw amino-acid sequence, 558 residues long: Ribonuclease Y (558 aa).

Residues 3–23 (VLSILLILVAVGVGIFVGRQF) traverse the membrane as a helical segment. Residues 248–311 (TTTTVELPSN…EIAKEALQRL (64 aa)) enclose the KH domain. Residues 374-467 (VLLHSKEVAY…VCAADALSAA (94 aa)) form the HD domain.

It belongs to the RNase Y family.

It is found in the cell membrane. Endoribonuclease that initiates mRNA decay. This is Ribonuclease Y from Aquifex aeolicus (strain VF5).